Here is a 301-residue protein sequence, read N- to C-terminus: Probable alpha-L-glutamate ligase (301 aa).

Residues 104-287 (LQLLSRRGIG…VAGMIIEYLE (184 aa)) enclose the ATP-grasp domain. Residues K141, 178–179 (EY), D187, and 211–213 (RSN) each bind ATP. Residues D248, E260, and N262 each contribute to the Mg(2+) site. Mn(2+) is bound by residues D248, E260, and N262.

This sequence belongs to the RimK family. It depends on Mg(2+) as a cofactor. Mn(2+) is required as a cofactor.

The protein is Probable alpha-L-glutamate ligase of Pseudomonas savastanoi pv. phaseolicola (strain 1448A / Race 6) (Pseudomonas syringae pv. phaseolicola (strain 1448A / Race 6)).